A 125-amino-acid polypeptide reads, in one-letter code: Small ribosomal subunit protein uS13 (125 aa).

Belongs to the universal ribosomal protein uS13 family. Part of the 30S ribosomal subunit. Forms a loose heterodimer with protein S19. Forms two bridges to the 50S subunit in the 70S ribosome.

Its function is as follows. Located at the top of the head of the 30S subunit, it contacts several helices of the 16S rRNA. In the 70S ribosome it contacts the 23S rRNA (bridge B1a) and protein L5 of the 50S subunit (bridge B1b), connecting the 2 subunits; these bridges are implicated in subunit movement. Contacts the tRNAs in the A and P-sites. The chain is Small ribosomal subunit protein uS13 from Rickettsia prowazekii (strain Madrid E).